Reading from the N-terminus, the 323-residue chain is Pantothenate kinase (323 aa).

Residue 101–108 coordinates ATP; sequence GSVAVGKS.

Belongs to the prokaryotic pantothenate kinase family.

It is found in the cytoplasm. It carries out the reaction (R)-pantothenate + ATP = (R)-4'-phosphopantothenate + ADP + H(+). It participates in cofactor biosynthesis; coenzyme A biosynthesis; CoA from (R)-pantothenate: step 1/5. The chain is Pantothenate kinase from Xanthobacter autotrophicus (strain ATCC BAA-1158 / Py2).